Reading from the N-terminus, the 3961-residue chain is Replicase polyprotein 1ab (3961 aa).

The C4-type; atypical zinc finger occupies 8 to 28 (CTCTPNARVFVAEGQVYCTRC). Residues 69–180 (ECSPTGACWL…EDFCPFECAM (112 aa)) enclose the Peptidase C31 domain. The segment at 69-182 (ECSPTGACWL…FCPFECAMAD (114 aa)) is PCP1-alpha. Residues Cys-76 and His-146 each act as for Nsp1-alpha papain-like cysteine proteinase activity in the active site. The important for host EIF2AK2 inhibition stretch occupies residues 199-200 (VS). Residues 263-382 (DTVPEGNCWW…IFRFGSHKWY (120 aa)) are PCP1-beta. The region spanning 263 to 383 (DTVPEGNCWW…FRFGSHKWYG (121 aa)) is the Peptidase C32 domain. Active-site for Nsp1-beta papain-like cysteine proteinase activity residues include Cys-270 and His-339. The OTU-like stretch occupies residues 426–513 (LKLYSPPAEG…GEHWTVSVNP (88 aa)). Residues 428–535 (LYSPPAEGNC…QGCCEHKGGL (108 aa)) enclose the Peptidase C33 domain. Catalysis depends on for Nsp2 cysteine proteinase activity residues Cys-437 and His-506. Pro residues predominate over residues 810 to 819 (WTPPPPPPRV). 3 disordered regions span residues 810–875 (WTPP…FPTP), 899–918 (TPLDGSAPVPAPRRTVSRPM), and 1148–1191 (TGEL…PADT). A run of 7 helical transmembrane segments spans residues 1266-1286 (FCLFLCYSYPFFGFAPLLGVF), 1296-1316 (GVFGCWLAFAVGLFKPVSDPV), 1368-1388 (VWHFLLRFGIVADCILAGAYV), 1583-1603 (LVAALHVACSMALHMLAGVYV), 1648-1668 (LTALVAGFGLQEIALVVLIFV), 1685-1705 (CILLAIASYVWVPLTWLLCVF), and 1719-1739 (ILWLVFFLISVNIPSGILAVV). The HD1 stretch occupies residues 1266–1388 (FCLFLCYSYP…ADCILAGAYV (123 aa)). The tract at residues 1583–1745 (LVAALHVACS…LAVVLLVSLW (163 aa)) is HD2. One can recognise a Peptidase S32 domain in the interval 1810–2013 (GAFRTQKPSL…ALLAAKPELE (204 aa)). Catalysis depends on charge relay system; for 3C-like serine proteinase activity residues His-1848, Asp-1873, and Ser-1927. Helical transmembrane passes span 2036–2056 (WTPLVAVGFFILNEILPAVLV), 2060–2080 (FSFGMFVLSWLTPWSAQVLMI), 2092–2112 (LSLGFYSLGAVTSFVADLAVT), 2137–2157 (SPVPVIACGVVHLLAIILYLF), and 2162–2182 (LHYVLVGDGVFSSAFFLRYFA). An HD3 region spans residues 2036–2157 (WTPLVAVGFF…HLLAIILYLF (122 aa)). The NiRAN domain maps to 2488 to 2651 (IIDKLQGLTK…LPYKLYPVRG (164 aa)). One can recognise a RdRp catalytic domain in the interval 2890-3024 (GRCLEADLAS…YAESPSMPNY (135 aa)). The region spanning 3145–3208 (GKKSRMCGYC…PPLGKGTSPL (64 aa)) is the AV ZBD domain. Zn(2+) contacts are provided by Cys-3151, Cys-3154, Cys-3164, Cys-3169, His-3172, His-3174, His-3176, His-3178, Cys-3185, His-3187, Cys-3194, and Cys-3197. A (+)RNA virus helicase ATP-binding domain is found at 3265–3417 (ASTALLPTCK…VFDIMPQTQL (153 aa)). Residue 3293–3300 (GPPGAGKT) participates in ATP binding. The (+)RNA virus helicase C-terminal domain maps to 3418–3546 (KTIWRFGQNI…AVHRDEQLIV (129 aa)). The AV-Nsp11N/CoV-Nsp15M domain occupies 3585–3681 (EGSSSPLPKV…LTKFVRGEAQ (97 aa)). In terms of domain architecture, NendoU spans 3683–3805 (LPETVFSTGR…MVWKGKTAYF (123 aa)). Active-site residues include His-3714, His-3729, and Lys-3758.

This sequence belongs to the arteriviridae polyprotein family. In terms of assembly, nsp1-alpha papain-like: Interacts with host RNF31. As to quaternary structure, interacts with host EIF2AK2; this interaction occurs in host stress granules and leads to EIF2AK2 inhibition. Interacts with host G3BP1; this interaction probably plays a role in Nsp1-beta-mediated inhibition of host EIF2AK2. Interacts with host DDX18; this interaction redistributes host DDX18 to the cytoplasm. In terms of assembly, interacts with host IFITM1. As to quaternary structure, interacts with host DDX5. Interacts with host OTULIN. In terms of assembly, interacts with host LGALS3. Post-translationally, specific enzymatic cleavages in vivo by its own proteases yield mature proteins. Nsp1 is autocleaved into two subunits, Nsp1-alpha and Nsp1-beta. There are two alternative pathways for processing. Either nsp4-5 is cleaved, which represents the major pathway or the nsp5-6 and nsp6-7 are processed, which represents the minor pathway. The major pathway occurs when nsp2 acts as a cofactor for nsp4.

Its subcellular location is the host nucleus. It is found in the host cytoplasm. It localises to the host membrane. The protein resides in the host endoplasmic reticulum. The protein localises to the host perinuclear region. It carries out the reaction RNA(n) + a ribonucleoside 5'-triphosphate = RNA(n+1) + diphosphate. It catalyses the reaction ATP + H2O = ADP + phosphate + H(+). The catalysed reaction is Thiol-dependent hydrolysis of ester, thioester, amide, peptide and isopeptide bonds formed by the C-terminal Gly of ubiquitin (a 76-residue protein attached to proteins as an intracellular targeting signal).. The enzyme catalyses uridylyl-uridylyl-ribonucleotide-RNA = a 3'-end uridylyl-2',3'-cyclophospho-uridine-RNA + a 5'-end dephospho-ribonucleoside-RNA. Its function is as follows. Contains the activities necessary for the transcription of negative stranded RNA, leader RNA, subgenomic mRNAs and progeny virion RNA as well as proteinases responsible for the cleavage of the polyprotein into functional products. In terms of biological role, inhibits host IFN-beta production. Plays a role in the degradation of the host transcriptional activator CREBBP protein. The degradation of host CREBBP which is a key component of the IFN enhanceosome is likely responsible for the inhibition of interferon mediated by Nsp1-alpha. Also participates in the inhibition of host NF-kappa-B activation by counteracting LUBAC-dependent induction of NF-kappa-B. Reduces host NEMO ubiquitination by blocking the interaction between the two LUBAC complex components RNF31 and SHARPIN. Functionally, plays a role in blocking host mRNA nuclear export to the cytoplasm and subversion of host protein synthesis. Additionally, inhibits the interferon-activated JAK/STAT signal transduction by mediating the ubiquitination and subsequent proteasomal degradation of host KPNA1. Repurposes the host antiviral stress granules into a proviral platform to counteract the EIF2AK2/PKR restriction, thereby regulating the host inflammatory response. Multifunctional protein that acts as a viral protease and as a viral antagonist of host immune response. Cleaves the nsp2/nsp3 site in the viral polyprotein. Displays deubiquitinating activity that cleaves both ubiquitinated and ISGylated products and therefore inhibits ubiquitin and ISG15-dependent host innate immunity. Also deubiquinates host NFKBIA, thereby interfering with NFKBIA degradation and impairing subsequent NF-kappa-B activation. Its function is as follows. Plays a role in the inhibition of the immune response by interacting with host IFITM1. This interaction leads to the proteasomal degradation of the IFN-induced antiviral protein IFITM1. In terms of biological role, cleaves the majority of cleavage sites present in the C-terminus of the polyprotein. Triggers host apoptosis through caspase-3, -8, and -9 activations. Subverts host innate immune responses through its protease activity. Targets the NF-kappa-B essential modulator NEMO and mediates its cleavage. Blocks host interferon beta induction and downstream signaling by cleaving mitochondrial MAVS, dislodging it from the mitochondria. Impairs host defense by cleaving host mRNA-decapping enzyme DCP1A to attenuate its antiviral activity. Functionally, plays a role in the initial induction of autophagosomes from host endoplasmic reticulum. Plays a role in the inhibition of host STAT3 signaling pathway by inducing the degradation of STAT3. Its function is as follows. Responsible for replication and transcription of the viral RNA genome. In terms of biological role, displays RNA and DNA duplex-unwinding activities with 5' to 3' polarity. Functionally, plays a role in viral transcription/replication and prevents the simultaneous activation of host cell dsRNA sensors, such as MDA5/IFIH1, OAS, PKR and NLRP3 inflammasome. Acts by degrading the 5'-polyuridines generated during replication of the poly(A) region of viral genomic and subgenomic RNAs. Catalyzes a two-step reaction in which a 2'3'-cyclic phosphate (2'3'-cP) is first generated by 2'-O transesterification, which is then hydrolyzed to a 3'-phosphate (3'-P). If not degraded, poly(U) RNA would hybridize with poly(A) RNA tails and activate host dsRNA sensors. Also plays a role in the inhibition of host type I interferon production by recruiting host OTULIN to promote removal of linear ubiquitination targeting host NEMO. This chain is Replicase polyprotein 1ab (rep), found in Porcine reproductive and respiratory syndrome virus (strain HB-1) (PRRSV).